The following is a 548-amino-acid chain: Probable 5-epi-aristolochene synthase 4 (548 aa).

Mg(2+)-binding residues include Asp301, Asp305, Asp444, Thr448, and Glu452. The DDXXD motif motif lies at 301-305 (DDTFD).

This sequence belongs to the terpene synthase family. In terms of assembly, monomer. The cofactor is Mg(2+).

The protein localises to the cytoplasm. The catalysed reaction is (2E,6E)-farnesyl diphosphate = (+)-5-epi-aristolochene + diphosphate. Its pathway is secondary metabolite biosynthesis; terpenoid biosynthesis. Functionally, catalyzes the cyclization of trans,trans-farnesyl diphosphate (FPP) to the bicyclic intermediate 5-epi-aristolochene, initial step in the conversion of FPP to the sesquiterpenoid antifungal phytoalexin capsidiol. Produces germacrene A as an enzyme-bound intermediate that is not released by the enzyme, but is further cyclized to produce the bicyclic 5-epi-aristolochene. This chain is Probable 5-epi-aristolochene synthase 4, found in Nicotiana attenuata (Coyote tobacco).